A 763-amino-acid chain; its full sequence is DEK domain-containing chromatin-associated protein 3 (763 aa).

Disordered regions lie at residues 1-324 and 458-681; these read MGED…RERK and TGDV…SDKV. The span at 11-20 shows a compositional bias: polar residues; it reads PTANKTTSLE. Basic and acidic residues-rich tracts occupy residues 32–44, 72–97, 124–172, and 180–242; these read AGGK…AKDE, SEVK…KDEG, TVMK…KANG, and DIKE…KVED. Residues 60 to 96 adopt a coiled-coil conformation; it reads KDDEKAETEDKESEVKKNEDNAETQKMEEKVEVTKDE. Positions 214-286 form a coiled coil; it reads GKEKEDKEEN…KEESKGSKKR (73 aa). The span at 243-252 shows a compositional bias: acidic residues; it reads EKEGSEDEND. The span at 253–264 shows a compositional bias: basic and acidic residues; that stretch reads NEKVESKDAKED. Acidic residues predominate over residues 265 to 277; the sequence is EKEETNDDKEDEK. The Nuclear localization signal 1 motif lies at 284 to 291; the sequence is KKRGKGTS. Over residues 295 to 311 the composition is skewed to basic and acidic residues; that stretch reads KVREKNKTEEVKKDAEP. A compositionally biased stretch (basic residues) spans 475–484; that stretch reads KGAKRKRTPK. The short motif at 483 to 490 is the Nuclear localization signal 2 element; the sequence is PKKTSPTA. The span at 485–496 shows a compositional bias: low complexity; sequence KTSPTAGSSSSK. Residues 513-551 are a coiled coil; the sequence is KKSLAHSDDESEEEKEEEEKQEEEKAEEKEEKKEEENEN. A compositionally biased stretch (acidic residues) spans 521–533; that stretch reads DESEEEKEEEEKQ. A compositionally biased stretch (basic and acidic residues) spans 534–547; the sequence is EEEKAEEKEEKKEE. Over residues 557–578 the composition is skewed to acidic residues; it reads SEDEAPQPSESEEKDESEEHSE. Low complexity-rich tracts occupy residues 606 to 615 and 650 to 660; these read AVVAAKSSPP and PIKASPAPSKS. The segment covering 661–681 has biased composition (basic and acidic residues); it reads ASKEKPVKRAGKGKDKPSDKV. Residues 676-731 enclose the DEK-C domain; sequence KPSDKVLKNAIVEILKRVDFSTATFTDILKELAKEFTEDLTPRKSSIKMIIQEELT. 2 DNA-binding regions span residues 694-708 and 723-727; these read DFST…KELA and KMIIQ. The stretch at 723–753 forms a coiled coil; it reads KMIIQEELTKLADEEEEEEKKEEDSEKEEAG. The segment at 730–763 is disordered; sequence LTKLADEEEEEEKKEEDSEKEEAGGSGGGEEVKA. A compositionally biased stretch (gly residues) spans 753–763; that stretch reads GGSGGGEEVKA.

Found in a mRNA splicing-dependent exon junction complex (EJC). Binds specifically histones H3 and H4. Interacts with TOP1A, SCC3, At1g61730, At1g20940, At1g13930, DEK4, HDT1, NIT1, SHL, CYP19-1, GEBPL, HSP70-3, PDP2, PDP3, KIN2, RPL11A and PDS5A. In terms of tissue distribution, highly expressed in young seedlings.

It localises to the nucleus. The protein resides in the nucleolus. Its function is as follows. Chromatin-associated protein which contributes to the modulation of chromatin structure (such as super-helical structure of DNA) and function. Binds to chromatin of protein-coding genes throughout the genome to regulate nucleosome occupancy and chromatin accessibility, and to modulate the expression of target genes. Negative regulator of stress tolerance (e.g. high salt). The protein is DEK domain-containing chromatin-associated protein 3 of Arabidopsis thaliana (Mouse-ear cress).